Here is a 369-residue protein sequence, read N- to C-terminus: Dihydroorotate dehydrogenase (quinone) (369 aa).

FMN is bound by residues 76 to 80 (AGLDK) and T100. K80 is a substrate binding site. Substrate is bound at residue 125-129 (NRMGF). FMN is bound by residues N154 and N187. Substrate is bound at residue N187. The active-site Nucleophile is S190. Residue N192 participates in substrate binding. FMN contacts are provided by K232 and S260. 261–262 (NT) is a substrate binding site. FMN-binding positions include G282, G311, and 332–333 (YS).

This sequence belongs to the dihydroorotate dehydrogenase family. Type 2 subfamily. In terms of assembly, monomer. FMN is required as a cofactor.

It is found in the cell membrane. It carries out the reaction (S)-dihydroorotate + a quinone = orotate + a quinol. The protein operates within pyrimidine metabolism; UMP biosynthesis via de novo pathway; orotate from (S)-dihydroorotate (quinone route): step 1/1. In terms of biological role, catalyzes the conversion of dihydroorotate to orotate with quinone as electron acceptor. This is Dihydroorotate dehydrogenase (quinone) (pyrD) from Deinococcus radiodurans (strain ATCC 13939 / DSM 20539 / JCM 16871 / CCUG 27074 / LMG 4051 / NBRC 15346 / NCIMB 9279 / VKM B-1422 / R1).